Here is a 405-residue protein sequence, read N- to C-terminus: L-rhamnonate dehydratase (405 aa).

Substrate contacts are provided by H33 and R59. Mg(2+) is bound by residues D226, E252, and E280. H329 acts as the Proton acceptor in catalysis. E349 provides a ligand contact to substrate.

Belongs to the mandelate racemase/muconate lactonizing enzyme family. RhamD subfamily. As to quaternary structure, homooctamer; tetramer of dimers. It depends on Mg(2+) as a cofactor.

It carries out the reaction L-rhamnonate = 2-dehydro-3-deoxy-L-rhamnonate + H2O. In terms of biological role, catalyzes the dehydration of L-rhamnonate to 2-keto-3-deoxy-L-rhamnonate (KDR). The chain is L-rhamnonate dehydratase from Escherichia coli O45:K1 (strain S88 / ExPEC).